We begin with the raw amino-acid sequence, 232 residues long: Fibrillarin-like rRNA/tRNA 2'-O-methyltransferase (232 aa).

S-adenosyl-L-methionine is bound by residues 89 to 90, 108 to 109, 133 to 134, and 153 to 156; these read TT, EF, DA, and DIAQ.

The protein belongs to the methyltransferase superfamily. Fibrillarin family. Interacts with nop5. Component of box C/D small ribonucleoprotein (sRNP) particles that contain rpl7ae, FlpA and nop5, plus a guide RNA.

Its function is as follows. Involved in pre-rRNA and tRNA processing. Utilizes the methyl donor S-adenosyl-L-methionine to catalyze the site-specific 2'-hydroxyl methylation of ribose moieties in rRNA and tRNA. Site specificity is provided by a guide RNA that base pairs with the substrate. Methylation occurs at a characteristic distance from the sequence involved in base pairing with the guide RNA. In Saccharolobus islandicus (strain L.S.2.15 / Lassen #1) (Sulfolobus islandicus), this protein is Fibrillarin-like rRNA/tRNA 2'-O-methyltransferase.